A 303-amino-acid polypeptide reads, in one-letter code: N-acetyl-D-glucosamine kinase (303 aa).

ATP-binding positions include 4–11 (GFDVGGTK) and 133–140 (GFGGGLVF). His-157, Cys-177, Cys-179, and Cys-184 together coordinate Zn(2+).

Belongs to the ROK (NagC/XylR) family. NagK subfamily.

It catalyses the reaction N-acetyl-D-glucosamine + ATP = N-acetyl-D-glucosamine 6-phosphate + ADP + H(+). The protein operates within cell wall biogenesis; peptidoglycan recycling. Its function is as follows. Catalyzes the phosphorylation of N-acetyl-D-glucosamine (GlcNAc) derived from cell-wall degradation, yielding GlcNAc-6-P. The polypeptide is N-acetyl-D-glucosamine kinase (Photobacterium profundum (strain SS9)).